The primary structure comprises 207 residues: Outer-membrane lipoprotein LolB (207 aa).

The N-terminal stretch at 1 to 21 is a signal peptide; it reads MTLPDFRLIRLLPLASLVLTA. A lipid anchor (N-palmitoyl cysteine) is attached at cysteine 22. The S-diacylglycerol cysteine moiety is linked to residue cysteine 22.

The protein belongs to the LolB family. Monomer.

The protein localises to the cell outer membrane. In terms of biological role, plays a critical role in the incorporation of lipoproteins in the outer membrane after they are released by the LolA protein. This is Outer-membrane lipoprotein LolB from Salmonella agona (strain SL483).